A 932-amino-acid polypeptide reads, in one-letter code: Beta-mannosidase A (932 aa).

The N-terminal stretch at 1–21 (MRIREQTILALLSPGLPPVTG) is a signal peptide. Residues asparagine 40, asparagine 248, asparagine 283, asparagine 317, and asparagine 348 are each glycosylated (N-linked (GlcNAc...) asparagine). Glutamate 480 acts as the Proton donor in catalysis. N-linked (GlcNAc...) asparagine glycosylation is found at asparagine 538, asparagine 609, asparagine 632, asparagine 659, asparagine 739, asparagine 762, and asparagine 791.

It belongs to the glycosyl hydrolase 2 family. Beta-mannosidase A subfamily. In terms of assembly, homodimer.

The protein localises to the secreted. The catalysed reaction is Hydrolysis of terminal, non-reducing beta-D-mannose residues in beta-D-mannosides.. It functions in the pathway glycan metabolism; N-glycan degradation. Exoglycosidase that cleaves the single beta-linked mannose residue from the non-reducing end of beta-mannosidic oligosaccharides of various complexity and length. Involved in the degradation of polymeric mannan and galactomannan. This is Beta-mannosidase A (mndA) from Aspergillus clavatus (strain ATCC 1007 / CBS 513.65 / DSM 816 / NCTC 3887 / NRRL 1 / QM 1276 / 107).